A 338-amino-acid chain; its full sequence is Taste receptor type 2 member 39 (338 aa).

Residues 1 to 30 lie on the Extracellular side of the membrane; it reads MLGRCFPPDTKEKQQLRMTKLCDPAESELS. The chain crosses the membrane as a helical span at residues 31–51; sequence PFLITLILAVLLAEYLIGIIA. The Cytoplasmic portion of the chain corresponds to 52 to 74; the sequence is NGFIMAIHAAEWVQNKAVSTSGR. The helical transmembrane segment at 75-95 threads the bilayer; sequence ILVFLSVSRIALQSLMMLEIT. Residues 96–116 are Extracellular-facing; it reads ISSTSLSFYSEDAVYYAFKIS. A helical transmembrane segment spans residues 117-137; sequence FIFLNFCSLWFAAWLSFFYFV. Residues 138 to 156 are Cytoplasmic-facing; that stretch reads KIANFSYPLFLKLRWRITG. The helical transmembrane segment at 157–177 threads the bilayer; sequence LIPWLLWLSVFISFSHSMFCI. The Extracellular portion of the chain corresponds to 178-205; that stretch reads NICTVYCNNSFPIHSSNSTKKTYLSEIN. N-linked (GlcNAc...) asparagine glycans are attached at residues Asn185 and Asn194. The chain crosses the membrane as a helical span at residues 206–226; it reads VVGLAFFFNLGIVTPLIMFIL. Topologically, residues 227-262 are cytoplasmic; that stretch reads TATLLILSLKRHTLHMGSNATGSNDPSMEAHMGAIK. The chain crosses the membrane as a helical span at residues 263–283; sequence AISYFLILYIFNAVALFIYLS. Residues 284–291 lie on the Extracellular side of the membrane; the sequence is NMFDINSL. The helical transmembrane segment at 292–312 threads the bilayer; that stretch reads WNNLCQIIMAAYPAGHSILPI. The Cytoplasmic segment spans residues 313–338; the sequence is QDNPGLRRAWKRLQLRLHLYPKEWTL.

It belongs to the G-protein coupled receptor T2R family.

The protein localises to the membrane. Receptor that may play a role in the perception of bitterness and is gustducin-linked. May play a role in sensing the chemical composition of the gastrointestinal content. The activity of this receptor may stimulate alpha gustducin, mediate PLC-beta-2 activation and lead to the gating of TRPM5. The protein is Taste receptor type 2 member 39 (TAS2R39) of Pan paniscus (Pygmy chimpanzee).